The sequence spans 205 residues: Dr1-associated corepressor (205 aa).

The region spanning 14–77 (PARIKKIMQT…SHLKQCIELE (64 aa)) is the Histone-fold domain. The tract at residues 91-205 (PDMQGDGEDN…DAEDEEDYDS (115 aa)) is disordered. Residues 98–108 (EDNHVDGDKGP) are compositionally biased toward basic and acidic residues. A compositionally biased stretch (acidic residues) spans 138-155 (SEQEDESEDTDTDGEEET). The span at 172 to 192 (PPTPFIPFTSPLPLPPAPPGP) shows a compositional bias: pro residues. The segment covering 196-205 (DAEDEEDYDS) has biased composition (acidic residues).

It belongs to the NC2 alpha/DRAP1 family. Heterodimer with DR1. Binds BTAF1. In terms of processing, phosphorylation reduces DNA binding, but has no effect on heterodimerization and TBP binding.

Its subcellular location is the nucleus. Its function is as follows. The association of the DR1/DRAP1 heterodimer with TBP results in a functional repression of both activated and basal transcription of class II genes. This interaction precludes the formation of a transcription-competent complex by inhibiting the association of TFIIA and/or TFIIB with TBP. Can bind to DNA on its own. In Mus musculus (Mouse), this protein is Dr1-associated corepressor (Drap1).